The sequence spans 200 residues: Large ribosomal subunit protein uL4 (200 aa).

Residues 44-70 are disordered; the sequence is AQKTRAEVTGSGKKPWRQKGTGRARSG.

It belongs to the universal ribosomal protein uL4 family. In terms of assembly, part of the 50S ribosomal subunit.

In terms of biological role, one of the primary rRNA binding proteins, this protein initially binds near the 5'-end of the 23S rRNA. It is important during the early stages of 50S assembly. It makes multiple contacts with different domains of the 23S rRNA in the assembled 50S subunit and ribosome. Functionally, protein L4 is a both a transcriptional repressor and a translational repressor protein. It regulates transcription of the S10 operon (to which L4 belongs) by causing premature termination of transcription within the S10 leader. L4 controls the translation of the S10 operon by binding to its mRNA. Its function is as follows. This protein when expressed in E.coli represses both transcription and translation of the endogenous S10 operon. As the M.morganii S10 leader can be regulated in vitro by the E.coli L4 protein this strongly suggests the endogenous protein controls its own S10 operon in a similar fashion. Forms part of the polypeptide exit tunnel. This Morganella morganii (Proteus morganii) protein is Large ribosomal subunit protein uL4 (rplD).